We begin with the raw amino-acid sequence, 476 residues long: 3-ketoacyl-CoA synthase 12 (476 aa).

Residues 1 to 25 form the signal peptide; it reads MDLLFLFFSLLLSYLFFKIWKLIDS. The 288-residue stretch at 26–313 folds into the FAE domain; the sequence is KQDKDCYILD…FMLKLLIKKI (288 aa). Active-site residues include cysteine 168, histidine 247, histidine 344, histidine 348, histidine 377, and asparagine 381.

This sequence belongs to the thiolase-like superfamily. Chalcone/stilbene synthases family. As to expression, expressed in siliques, flowers and leaves.

It is found in the endoplasmic reticulum. It catalyses the reaction a very-long-chain acyl-CoA + malonyl-CoA + H(+) = a very-long-chain 3-oxoacyl-CoA + CO2 + CoA. It functions in the pathway lipid metabolism; fatty acid biosynthesis. This Arabidopsis thaliana (Mouse-ear cress) protein is 3-ketoacyl-CoA synthase 12.